The primary structure comprises 59 residues: Small ribosomal subunit protein bS21 (59 aa).

The tract at residues 34–59 (KHEHYEKPSVKRKKKSEAARRRKRSF) is disordered. Basic residues predominate over residues 43–59 (VKRKKKSEAARRRKRSF).

The protein belongs to the bacterial ribosomal protein bS21 family.

This is Small ribosomal subunit protein bS21 from Desulforudis audaxviator (strain MP104C).